A 674-amino-acid polypeptide reads, in one-letter code: ATP-dependent DNA helicase Hel308 (674 aa).

Residues Gln27 and 44-51 (VPTAAGKT) contribute to the ATP site. The Helicase ATP-binding domain maps to 31 to 197 (IEQFRKGKNI…WLNASLIKSS (167 aa)). Positions 142-145 (DEIH) match the DEAH box motif. In terms of domain architecture, Helicase C-terminal spans 224–411 (DINLLVKETV…PEKVRFNTLA (188 aa)).

It belongs to the helicase family. Hel308 subfamily. Monomer.

It catalyses the reaction Couples ATP hydrolysis with the unwinding of duplex DNA by translocating in the 3'-5' direction.. The enzyme catalyses ATP + H2O = ADP + phosphate + H(+). Functionally, DNA-dependent ATPase and 3'-5' DNA helicase that may be involved in repair of stalled replication forks. The chain is ATP-dependent DNA helicase Hel308 from Thermoplasma volcanium (strain ATCC 51530 / DSM 4299 / JCM 9571 / NBRC 15438 / GSS1).